We begin with the raw amino-acid sequence, 284 residues long: 4-hydroxybenzoate octaprenyltransferase (284 aa).

8 helical membrane passes run 18–38 (PIGT…AAEG), 42–62 (WHVL…GCVI), 93–113 (IILF…MNPL), 136–156 (HLPQ…AWAA), 161–181 (LPWV…AYDT), 209–229 (LIIG…GLHY), 233–253 (QSFY…QHLI), and 264–284 (AFLN…VAFW).

It belongs to the UbiA prenyltransferase family. Mg(2+) serves as cofactor.

It is found in the cell inner membrane. The enzyme catalyses all-trans-octaprenyl diphosphate + 4-hydroxybenzoate = 4-hydroxy-3-(all-trans-octaprenyl)benzoate + diphosphate. It functions in the pathway cofactor biosynthesis; ubiquinone biosynthesis. Its function is as follows. Catalyzes the prenylation of para-hydroxybenzoate (PHB) with an all-trans polyprenyl group. Mediates the second step in the final reaction sequence of ubiquinone-8 (UQ-8) biosynthesis, which is the condensation of the polyisoprenoid side chain with PHB, generating the first membrane-bound Q intermediate 3-octaprenyl-4-hydroxybenzoate. This Vibrio vulnificus (strain CMCP6) protein is 4-hydroxybenzoate octaprenyltransferase.